The following is a 39-amino-acid chain: Photosystem II reaction center protein L (39 aa).

The helical transmembrane segment at 18-38 (SLYLGLLLIAVLGILFSSYFF) threads the bilayer.

This sequence belongs to the PsbL family. As to quaternary structure, PSII is composed of 1 copy each of membrane proteins PsbA, PsbB, PsbC, PsbD, PsbE, PsbF, PsbH, PsbI, PsbJ, PsbK, PsbL, PsbM, PsbT, PsbX, PsbY, PsbZ, Psb30/Ycf12, peripheral proteins PsbO, CyanoQ (PsbQ), PsbU, PsbV and a large number of cofactors. It forms dimeric complexes.

The protein resides in the cellular thylakoid membrane. One of the components of the core complex of photosystem II (PSII). PSII is a light-driven water:plastoquinone oxidoreductase that uses light energy to abstract electrons from H(2)O, generating O(2) and a proton gradient subsequently used for ATP formation. It consists of a core antenna complex that captures photons, and an electron transfer chain that converts photonic excitation into a charge separation. This subunit is found at the monomer-monomer interface and is required for correct PSII assembly and/or dimerization. In Picosynechococcus sp. (strain ATCC 27264 / PCC 7002 / PR-6) (Agmenellum quadruplicatum), this protein is Photosystem II reaction center protein L.